Reading from the N-terminus, the 139-residue chain is Transcription antitermination protein NusB (139 aa).

It belongs to the NusB family.

In terms of biological role, involved in transcription antitermination. Required for transcription of ribosomal RNA (rRNA) genes. Binds specifically to the boxA antiterminator sequence of the ribosomal RNA (rrn) operons. The sequence is that of Transcription antitermination protein NusB from Limosilactobacillus fermentum (strain NBRC 3956 / LMG 18251) (Lactobacillus fermentum).